The following is a 255-amino-acid chain: 2-succinyl-6-hydroxy-2,4-cyclohexadiene-1-carboxylate synthase (255 aa).

The protein belongs to the AB hydrolase superfamily. MenH family. In terms of assembly, monomer.

It carries out the reaction 5-enolpyruvoyl-6-hydroxy-2-succinyl-cyclohex-3-ene-1-carboxylate = (1R,6R)-6-hydroxy-2-succinyl-cyclohexa-2,4-diene-1-carboxylate + pyruvate. Its pathway is quinol/quinone metabolism; 1,4-dihydroxy-2-naphthoate biosynthesis; 1,4-dihydroxy-2-naphthoate from chorismate: step 3/7. The protein operates within quinol/quinone metabolism; menaquinone biosynthesis. Its function is as follows. Catalyzes a proton abstraction reaction that results in 2,5-elimination of pyruvate from 2-succinyl-5-enolpyruvyl-6-hydroxy-3-cyclohexene-1-carboxylate (SEPHCHC) and the formation of 2-succinyl-6-hydroxy-2,4-cyclohexadiene-1-carboxylate (SHCHC). The chain is 2-succinyl-6-hydroxy-2,4-cyclohexadiene-1-carboxylate synthase from Serratia proteamaculans (strain 568).